A 78-amino-acid chain; its full sequence is Small ribosomal subunit protein bS18 (78 aa).

Belongs to the bacterial ribosomal protein bS18 family. In terms of assembly, part of the 30S ribosomal subunit. Forms a tight heterodimer with protein bS6.

Its function is as follows. Binds as a heterodimer with protein bS6 to the central domain of the 16S rRNA, where it helps stabilize the platform of the 30S subunit. The chain is Small ribosomal subunit protein bS18 from Kineococcus radiotolerans (strain ATCC BAA-149 / DSM 14245 / SRS30216).